The chain runs to 347 residues: Phosphoribosylformylglycinamidine cyclo-ligase (347 aa).

This sequence belongs to the AIR synthase family.

The protein resides in the cytoplasm. The enzyme catalyses 2-formamido-N(1)-(5-O-phospho-beta-D-ribosyl)acetamidine + ATP = 5-amino-1-(5-phospho-beta-D-ribosyl)imidazole + ADP + phosphate + H(+). Its pathway is purine metabolism; IMP biosynthesis via de novo pathway; 5-amino-1-(5-phospho-D-ribosyl)imidazole from N(2)-formyl-N(1)-(5-phospho-D-ribosyl)glycinamide: step 2/2. The protein is Phosphoribosylformylglycinamidine cyclo-ligase of Prochlorococcus marinus subsp. pastoris (strain CCMP1986 / NIES-2087 / MED4).